The primary structure comprises 192 residues: uncharacterized protein (192 aa).

A disordered region spans residues 71–100; that stretch reads NNVLPEPSKPNNPVVNPPVSPIQPKTDPEQ. Residues 77–91 show a composition bias toward pro residues; it reads PSKPNNPVVNPPVSP.

This is an uncharacterized protein from Caenorhabditis elegans.